The primary structure comprises 256 residues: Lysine-rich coiled-coil protein 1 (256 aa).

2 disordered regions span residues 61-83 (QRIP…TEDR) and 141-256 (GHST…ILGF). 2 stretches are compositionally biased toward polar residues: residues 64 to 79 (PSGT…SSSQ) and 141 to 153 (GHST…SHRQ). Composition is skewed to basic and acidic residues over residues 161-188 (HLEE…DLNK) and 218-227 (KNRDVSSKKE). Residues 208–247 (TEKLKNRKEKKNRDVSSKKEDRKRRKEKKEQGEERTEEEM) adopt a coiled-coil conformation.

The chain is Lysine-rich coiled-coil protein 1 (Krcc1) from Rattus norvegicus (Rat).